The sequence spans 353 residues: ATP-dependent kinase YFH7 (353 aa).

31-39 (GPPGSGKST) is a binding site for ATP.

The protein belongs to the YFH7 family.

Functionally, ATP-dependent kinase that could be involved in endoplasmic reticulum membrane assembly. This chain is ATP-dependent kinase YFH7 (YFH7), found in Kluyveromyces lactis (strain ATCC 8585 / CBS 2359 / DSM 70799 / NBRC 1267 / NRRL Y-1140 / WM37) (Yeast).